The primary structure comprises 354 residues: DNA ligase C2 (354 aa).

Residue Lys29 is the N6-AMP-lysine intermediate of the active site.

The protein belongs to the ATP-dependent DNA ligase family.

It catalyses the reaction ATP + (deoxyribonucleotide)n-3'-hydroxyl + 5'-phospho-(deoxyribonucleotide)m = (deoxyribonucleotide)n+m + AMP + diphosphate.. In terms of biological role, DNA ligase that seals nicks in double-stranded DNA during DNA replication, DNA recombination and DNA repair. Has weak intrinsic nick joining activities and accumulates DNA-adenylate. Acts as a backup for LigD in the Ku-LigD-dependent NHEJ pathway. This Mycolicibacterium smegmatis (strain ATCC 700084 / mc(2)155) (Mycobacterium smegmatis) protein is DNA ligase C2 (ligC2).